The sequence spans 681 residues: Minichromosome maintenance domain-containing protein 2 (681 aa).

Ser-292 carries the phosphoserine modification. Residues 533–621 (KQFTTEDFEK…LIAALLLEIS (89 aa)) enclose the MCM domain.

In terms of tissue distribution, predominantly expressed in the gonads and the brain. Not detected in the heart, lung, nor embryonic fibroblasts.

Its function is as follows. Plays an important role in meiotic recombination and associated DNA double-strand break repair. The sequence is that of Minichromosome maintenance domain-containing protein 2 (Mcmdc2) from Mus musculus (Mouse).